The following is a 102-amino-acid chain: Acid shock protein (102 aa).

The N-terminal stretch at 1–21 (MKKVLALVVAAAMGLSSAAFA) is a signal peptide. Positions 22–58 (AETAITPAPTATTTKAAPAKTTHHKKQHKAAPAQKAQ) are excised as a propeptide. The span at 26–41 (ITPAPTATTTKAAPAK) shows a compositional bias: low complexity. A disordered region spans residues 26–102 (ITPAPTATTT…PAKPAAQPAA (77 aa)). Residues 80 to 90 (AAKKHAKKHSH) are compositionally biased toward basic residues. The span at 91–102 (QQPAKPAAQPAA) shows a compositional bias: low complexity.

The protein belongs to the Asr family. Post-translationally, proteolytic processing gives rise to the active protein.

It localises to the periplasm. Functionally, required for growth and/or survival at acidic conditions. This Escherichia coli O81 (strain ED1a) protein is Acid shock protein.